The primary structure comprises 231 residues: Chromosome partition protein MukE (231 aa).

The interval 204-231 is disordered; sequence TPEPSQQSLLENPTAEYDEEQTEWEDEA. The segment covering 219–231 has biased composition (acidic residues); that stretch reads EYDEEQTEWEDEA.

The protein belongs to the MukE family. Interacts, and probably forms a ternary complex, with MukF and MukB. The complex formation is stimulated by calcium or magnesium.

It localises to the cytoplasm. The protein resides in the nucleoid. Its function is as follows. Involved in chromosome condensation, segregation and cell cycle progression. May participate in facilitating chromosome segregation by condensation DNA from both sides of a centrally located replisome during cell division. Probably acts via its interaction with MukB and MukF. The chain is Chromosome partition protein MukE from Vibrio cholerae serotype O1 (strain ATCC 39315 / El Tor Inaba N16961).